The chain runs to 663 residues: GPI mannosyltransferase 3 (663 aa).

The segment covering 1–11 (MPMSARSRRSN) has biased composition (basic residues). A disordered region spans residues 1–44 (MPMSARSRRSNPRLPPSPSSSSSSDAVRASPHSSPPSRLRPPSA). A compositionally biased stretch (low complexity) spans 19 to 42 (SSSSSSDAVRASPHSSPPSRLRPP). Transmembrane regions (helical) follow at residues 47 to 67 (DVSS…ALTV), 110 to 130 (PLIF…LGLT), 137 to 157 (LLIA…DFYT), 226 to 246 (VLAV…FPPL), 269 to 289 (YASQ…LVGL), 304 to 324 (GSIL…LSVI), 335 to 355 (LLPA…IPAL), and 367 to 387 (LTLI…TLFH). Residues 492-512 (HIPRRPSYATPPSSQRQPTQL) form a disordered region. A compositionally biased stretch (polar residues) spans 501–511 (TPPSSQRQPTQ).

Belongs to the glycosyltransferase 22 family. PIGB subfamily.

Its subcellular location is the endoplasmic reticulum membrane. It functions in the pathway glycolipid biosynthesis; glycosylphosphatidylinositol-anchor biosynthesis. Functionally, mannosyltransferase involved in glycosylphosphatidylinositol-anchor biosynthesis. Transfers the third mannose to Man2-GlcN-acyl-PI during GPI precursor assembly. This is GPI mannosyltransferase 3 (gpi10) from Emericella nidulans (strain FGSC A4 / ATCC 38163 / CBS 112.46 / NRRL 194 / M139) (Aspergillus nidulans).